The chain runs to 763 residues: Thiamine biosynthesis multifunctional protein ThiED (763 aa).

The segment at 1–210 is thiamine-phosphate synthase; that stretch reads MTDFSLYLVT…ANPAAAATRL (210 aa). Residues 37 to 41 and N69 each bind 4-amino-2-methyl-5-(diphosphooxymethyl)pyrimidine; that span reads QLRDK. Residues D70 and D88 each contribute to the Mg(2+) site. S107 is a 4-amino-2-methyl-5-(diphosphooxymethyl)pyrimidine binding site. 140–142 is a binding site for 2-[(2R,5Z)-2-carboxy-4-methylthiazol-5(2H)-ylidene]ethyl phosphate; the sequence is TAT. K143 contributes to the 4-amino-2-methyl-5-(diphosphooxymethyl)pyrimidine binding site. 2-[(2R,5Z)-2-carboxy-4-methylthiazol-5(2H)-ylidene]ethyl phosphate is bound by residues G174 and 194–195; that span reads VS. A hydroxymethylpyrimidine/phosphomethylpyrimidine kinase region spans residues 245 to 500; it reads LSIAGTDPTG…GTGNGPVDHG (256 aa). Q282 is a 4-amino-5-hydroxymethyl-2-methylpyrimidine binding site. Residues 550-763 are thiaminase-2; the sequence is FTRALWEASG…RHGWTMVGSS (214 aa).

This sequence in the N-terminal section; belongs to the thiamine-phosphate synthase family. It in the central section; belongs to the ThiD family. In the C-terminal section; belongs to the thiaminase-2 family. The cofactor is Mg(2+).

The catalysed reaction is 2-[(2R,5Z)-2-carboxy-4-methylthiazol-5(2H)-ylidene]ethyl phosphate + 4-amino-2-methyl-5-(diphosphooxymethyl)pyrimidine + 2 H(+) = thiamine phosphate + CO2 + diphosphate. It carries out the reaction 2-(2-carboxy-4-methylthiazol-5-yl)ethyl phosphate + 4-amino-2-methyl-5-(diphosphooxymethyl)pyrimidine + 2 H(+) = thiamine phosphate + CO2 + diphosphate. The enzyme catalyses 4-methyl-5-(2-phosphooxyethyl)-thiazole + 4-amino-2-methyl-5-(diphosphooxymethyl)pyrimidine + H(+) = thiamine phosphate + diphosphate. It catalyses the reaction 4-amino-5-hydroxymethyl-2-methylpyrimidine + ATP = 4-amino-2-methyl-5-(phosphooxymethyl)pyrimidine + ADP + H(+). The catalysed reaction is 4-amino-2-methyl-5-(phosphooxymethyl)pyrimidine + ATP = 4-amino-2-methyl-5-(diphosphooxymethyl)pyrimidine + ADP. It participates in cofactor biosynthesis; thiamine diphosphate biosynthesis; 4-amino-2-methyl-5-diphosphomethylpyrimidine from 5-amino-1-(5-phospho-D-ribosyl)imidazole: step 3/3. Its pathway is cofactor biosynthesis; thiamine diphosphate biosynthesis; thiamine phosphate from 4-amino-2-methyl-5-diphosphomethylpyrimidine and 4-methyl-5-(2-phosphoethyl)-thiazole: step 1/1. Condenses 4-methyl-5-(beta-hydroxyethyl)thiazole monophosphate (THZ-P) and 2-methyl-4-amino-5-hydroxymethyl pyrimidine pyrophosphate (HMP-PP) to form thiamine monophosphate (TMP). In terms of biological role, catalyzes the phosphorylation of hydroxymethylpyrimidine phosphate (HMP-P) to HMP-PP, and of HMP to HMP-P. This chain is Thiamine biosynthesis multifunctional protein ThiED (theD), found in Corynebacterium glutamicum (strain ATCC 13032 / DSM 20300 / JCM 1318 / BCRC 11384 / CCUG 27702 / LMG 3730 / NBRC 12168 / NCIMB 10025 / NRRL B-2784 / 534).